We begin with the raw amino-acid sequence, 198 residues long: Ribonuclease HII (198 aa).

An RNase H type-2 domain is found at 10 to 198; it reads HLVAGVDEVG…PVKRALGLAS (189 aa). The a divalent metal cation site is built by D16, E17, and D108.

It belongs to the RNase HII family. Requires Mn(2+) as cofactor. Mg(2+) serves as cofactor.

It localises to the cytoplasm. The enzyme catalyses Endonucleolytic cleavage to 5'-phosphomonoester.. In terms of biological role, endonuclease that specifically degrades the RNA of RNA-DNA hybrids. The sequence is that of Ribonuclease HII from Escherichia coli (strain ATCC 8739 / DSM 1576 / NBRC 3972 / NCIMB 8545 / WDCM 00012 / Crooks).